We begin with the raw amino-acid sequence, 337 residues long: ERI1 exoribonuclease 3 (337 aa).

The Exonuclease domain maps to 146 to 320 (FLVLDFEATC…DDCKNIANIM (175 aa)). Residues aspartate 150, glutamate 152, and aspartate 249 each contribute to the Mg(2+) site. The active-site Proton acceptor is glutamate 152. Glutamate 152 is a binding site for AMP. Residue histidine 307 is the Proton acceptor of the active site. Position 307 (histidine 307) interacts with AMP. Aspartate 312 is a Mg(2+) binding site.

As to quaternary structure, interacts with PRNP. Mg(2+) serves as cofactor.

The sequence is that of ERI1 exoribonuclease 3 (ERI3) from Homo sapiens (Human).